The following is a 485-amino-acid chain: Glutamate--tRNA ligase 2 (485 aa).

Residues 10-20 carry the 'HIGH' region motif; the sequence is PSPTGPIHIGN. The short motif at 252–256 is the 'KMSKS' region element; sequence KLSKR. Residue Lys-255 participates in ATP binding.

The protein belongs to the class-I aminoacyl-tRNA synthetase family. Glutamate--tRNA ligase type 1 subfamily. In terms of assembly, monomer.

The protein resides in the cytoplasm. The catalysed reaction is tRNA(Glu) + L-glutamate + ATP = L-glutamyl-tRNA(Glu) + AMP + diphosphate. Catalyzes the attachment of glutamate to tRNA(Glu) in a two-step reaction: glutamate is first activated by ATP to form Glu-AMP and then transferred to the acceptor end of tRNA(Glu). The chain is Glutamate--tRNA ligase 2 from Caldanaerobacter subterraneus subsp. tengcongensis (strain DSM 15242 / JCM 11007 / NBRC 100824 / MB4) (Thermoanaerobacter tengcongensis).